We begin with the raw amino-acid sequence, 483 residues long: Zinc metalloproteinase/disintegrin (483 aa).

Residues 1–20 (MIQVLLVTVCLAVFPYQGSS) form the signal peptide. The propeptide occupies 21–190 (IILESGNVND…KASQLYLTPE (170 aa)). One can recognise a Peptidase M12B domain in the interval 197-395 (RYVKLAIVVD…YKPQCILNAP (199 aa)). 3 disulfide bridges follow: Cys-308–Cys-390, Cys-352–Cys-374, and Cys-354–Cys-357. Residue His-333 coordinates Zn(2+). The active site involves Glu-334. His-337 and His-343 together coordinate Zn(2+). The propeptide occupies 396–411 (LRTDTVSTPVSGNELL). One can recognise a Disintegrin domain in the interval 403–483 (TPVSGNELLE…SDDCPRWNDL (81 aa)). Cystine bridges form between Cys-417/Cys-432, Cys-419/Cys-427, Cys-426/Cys-449, Cys-440/Cys-446, Cys-445/Cys-470, and Cys-458/Cys-477. The Cell attachment site signature appears at 462 to 464 (RGD).

This sequence belongs to the venom metalloproteinase (M12B) family. P-II subfamily. P-IIa sub-subfamily. Monomer. Zn(2+) is required as a cofactor. As to expression, expressed by the venom gland.

The protein localises to the secreted. Its function is as follows. Impairs hemostasis in the envenomed animal. In terms of biological role, inhibits ADP- and collagen-induced human platelet aggregation with IC(50) of 123 and 135 nM, respectively. Inhibits sperm-egg binding in a concentration-dependent manner, but has no effect on the fusion of sperm-egg. The protein is Zinc metalloproteinase/disintegrin of Protobothrops jerdonii (Jerdon's pitviper).